Here is a 91-residue protein sequence, read N- to C-terminus: Small ribosomal subunit protein uS19 (91 aa).

The protein belongs to the universal ribosomal protein uS19 family.

Protein S19 forms a complex with S13 that binds strongly to the 16S ribosomal RNA. The polypeptide is Small ribosomal subunit protein uS19 (Prochlorococcus marinus (strain MIT 9211)).